Consider the following 1019-residue polypeptide: Collagen alpha-2(VI) chain (1019 aa).

The N-terminal stretch at 1–20 is a signal peptide; that stretch reads MLQGTCSVLLLWGILGAIQA. The interval 21-256 is nonhelical region; sequence QQQEVISPDT…YKVSCLEIPG (236 aa). In terms of domain architecture, VWFA 1 spans 46–234; it reads HVYFVLDTSE…EIDQDTINRI (189 aa). An N-linked (GlcNAc...) asparagine glycan is attached at Asn140. The disordered stretch occupies residues 257-588; it reads PSGPKGYRGQ…GEPGPPGDPG (332 aa). The segment at 257-590 is triple-helical region; sequence PSGPKGYRGQ…PGPPGDPGLT (334 aa). Over residues 287–305 the composition is skewed to low complexity; sequence DPGIEGPIGFPGPKGVPGF. Over residues 306–318 the composition is skewed to basic and acidic residues; the sequence is KGEKGEFGADGRK. Residue Asn327 is glycosylated (N-linked (GlcNAc...) asparagine). Basic and acidic residues-rich tracts occupy residues 365 to 377 and 419 to 429; these read ERGDQGGKGDPGR and PKGEPGRRGDP. Short sequence motifs (cell attachment site) lie at residues 366-368, 426-428, 489-491, 498-500, and 539-541; these read RGD. Residues 524-557 are compositionally biased toward basic and acidic residues; it reads PGEKGEPGPRGPEGGRGDFGLKGEPGRKGEKGEP. Over residues 559-569 the composition is skewed to pro residues; it reads DPGPPGEPGPR. A nonhelical region region spans residues 591–1019; sequence ECDVMTYVRE…FFDRFIRWIC (429 aa). 2 VWFA domains span residues 615–805 and 833–1014; these read DVVF…EDVL and DIVF…FDRF. A glycan (N-linked (GlcNAc...) asparagine) is linked at Asn630. At Thr701 the chain carries Phosphothreonine. A Phosphoserine modification is found at Ser705. 3 N-linked (GlcNAc...) asparagine glycosylation sites follow: Asn785, Asn897, and Asn954.

This sequence belongs to the type VI collagen family. As to quaternary structure, trimers composed of three different chains: alpha-1(VI), alpha-2(VI), and alpha-3(VI) or alpha-5(VI) or alpha-6(VI). Interacts with CSPG4. Post-translationally, prolines at the third position of the tripeptide repeating unit (G-X-Y) are hydroxylated in some or all of the chains.

It is found in the secreted. The protein resides in the extracellular space. It localises to the extracellular matrix. The protein localises to the membrane. Collagen VI acts as a cell-binding protein. This chain is Collagen alpha-2(VI) chain (COL6A2), found in Homo sapiens (Human).